The following is a 295-amino-acid chain: Diaminopimelate epimerase (295 aa).

Substrate contacts are provided by asparagine 13, glutamine 46, and asparagine 66. Cysteine 75 acts as the Proton donor in catalysis. Substrate-binding positions include 76–77 (GN), asparagine 162, asparagine 195, and 213–214 (ER). The Proton acceptor role is filled by cysteine 222. A substrate-binding site is contributed by 223–224 (GT).

The protein belongs to the diaminopimelate epimerase family. In terms of assembly, homodimer.

It localises to the cytoplasm. It carries out the reaction (2S,6S)-2,6-diaminopimelate = meso-2,6-diaminopimelate. The protein operates within amino-acid biosynthesis; L-lysine biosynthesis via DAP pathway; DL-2,6-diaminopimelate from LL-2,6-diaminopimelate: step 1/1. Functionally, catalyzes the stereoinversion of LL-2,6-diaminopimelate (L,L-DAP) to meso-diaminopimelate (meso-DAP), a precursor of L-lysine and an essential component of the bacterial peptidoglycan. This is Diaminopimelate epimerase from Psychrobacter arcticus (strain DSM 17307 / VKM B-2377 / 273-4).